The chain runs to 121 residues: Small ribosomal subunit protein uS13 (121 aa).

Residues 94–121 (GLPMRGQRTRTNARTRKGPRKGAAALKK) form a disordered region.

Belongs to the universal ribosomal protein uS13 family. Part of the 30S ribosomal subunit. Forms a loose heterodimer with protein S19. Forms two bridges to the 50S subunit in the 70S ribosome.

In terms of biological role, located at the top of the head of the 30S subunit, it contacts several helices of the 16S rRNA. In the 70S ribosome it contacts the 23S rRNA (bridge B1a) and protein L5 of the 50S subunit (bridge B1b), connecting the 2 subunits; these bridges are implicated in subunit movement. Contacts the tRNAs in the A and P-sites. This is Small ribosomal subunit protein uS13 from Delftia acidovorans (strain DSM 14801 / SPH-1).